The primary structure comprises 168 residues: Peptide deformylase 2 (168 aa).

C91 and H133 together coordinate Fe cation. E134 is a catalytic residue. H137 contacts Fe cation.

This sequence belongs to the polypeptide deformylase family. Fe(2+) serves as cofactor.

The catalysed reaction is N-terminal N-formyl-L-methionyl-[peptide] + H2O = N-terminal L-methionyl-[peptide] + formate. Its function is as follows. Removes the formyl group from the N-terminal Met of newly synthesized proteins. Requires at least a dipeptide for an efficient rate of reaction. N-terminal L-methionine is a prerequisite for activity but the enzyme has broad specificity at other positions. The polypeptide is Peptide deformylase 2 (Vibrio vulnificus (strain CMCP6)).